We begin with the raw amino-acid sequence, 230 residues long: Small ribosomal subunit protein uS3 (230 aa).

Positions Val-39 to Lys-107 constitute a KH type-2 domain.

This sequence belongs to the universal ribosomal protein uS3 family. As to quaternary structure, part of the 30S ribosomal subunit. Forms a tight complex with proteins S10 and S14.

In terms of biological role, binds the lower part of the 30S subunit head. Binds mRNA in the 70S ribosome, positioning it for translation. The polypeptide is Small ribosomal subunit protein uS3 (Vesicomyosocius okutanii subsp. Calyptogena okutanii (strain HA)).